A 110-amino-acid polypeptide reads, in one-letter code: uncharacterized protein (110 aa).

This is an uncharacterized protein from Enterobacteria phage T4 (Bacteriophage T4).